The primary structure comprises 88 residues: Small ribosomal subunit protein uS15 (88 aa).

Belongs to the universal ribosomal protein uS15 family. In terms of assembly, part of the 30S ribosomal subunit. Forms a bridge to the 50S subunit in the 70S ribosome, contacting the 23S rRNA.

One of the primary rRNA binding proteins, it binds directly to 16S rRNA where it helps nucleate assembly of the platform of the 30S subunit by binding and bridging several RNA helices of the 16S rRNA. In terms of biological role, forms an intersubunit bridge (bridge B4) with the 23S rRNA of the 50S subunit in the ribosome. In Borrelia hermsii (strain HS1 / DAH), this protein is Small ribosomal subunit protein uS15.